Consider the following 281-residue polypeptide: 2-dehydro-3-deoxyphosphooctonate aldolase (281 aa).

This sequence belongs to the KdsA family.

It is found in the cytoplasm. It catalyses the reaction D-arabinose 5-phosphate + phosphoenolpyruvate + H2O = 3-deoxy-alpha-D-manno-2-octulosonate-8-phosphate + phosphate. It functions in the pathway carbohydrate biosynthesis; 3-deoxy-D-manno-octulosonate biosynthesis; 3-deoxy-D-manno-octulosonate from D-ribulose 5-phosphate: step 2/3. Its pathway is bacterial outer membrane biogenesis; lipopolysaccharide biosynthesis. In Acidithiobacillus ferrooxidans (strain ATCC 23270 / DSM 14882 / CIP 104768 / NCIMB 8455) (Ferrobacillus ferrooxidans (strain ATCC 23270)), this protein is 2-dehydro-3-deoxyphosphooctonate aldolase.